The chain runs to 238 residues: Lytic polysaccharide monooxygenase NCU01050 (238 aa).

The first 15 residues, 1-15 (MKVLAPLVLASAASA), serve as a signal peptide directing secretion. H16 serves as a coordination point for Cu(2+). E45 contributes to the O2 binding site. Intrachain disulfides connect C54-C186 and C156-C238. N75 carries N-linked (GlcNAc...) asparagine glycosylation. Residue H99 participates in Cu(2+) binding. H172 and Q181 together coordinate O2. Catalysis depends on H172, which acts as the Proton donor. Y183 lines the Cu(2+) pocket.

The protein belongs to the polysaccharide monooxygenase AA9 family. As to quaternary structure, monomer. The cofactor is Cu(2+). N-linked glycans containing mannose and N-acetylglucosamine.

It localises to the secreted. The enzyme catalyses [(1-&gt;4)-beta-D-glucosyl]n+m + reduced acceptor + O2 = 4-dehydro-beta-D-glucosyl-[(1-&gt;4)-beta-D-glucosyl]n-1 + [(1-&gt;4)-beta-D-glucosyl]m + acceptor + H2O.. Its pathway is glycan metabolism; cellulose degradation. With respect to regulation, inhibited by increasing levels of ascorbic acid. Its function is as follows. Catalyzes the oxidative cleavage of glycosidic bonds in cellulosic substrates via a copper-dependent mechanism. In the presence of an exogenous reductant ascorbic acid, degrades phosphoric acid swollen cellulose (PASC) to cello-oligosaccharides and 4-ketoaldoses, the end products oxidized at the non-reducing end. Somewhat active toward tamarind xyloglucan and konjac glucomannan, with improved activity with glucomannan in the presence of PASC. H(2)O(2) is able to substitute for O(2) in reactions with PASC, xyloglucan and glucomannan. Very weak activity on cellopentaose. No activity with birchwood xylan or ivory nut mannan. Disrupts plant cell wall polysaccharide substrates, such as recalcitrant crystalline cellulose. In Neurospora crassa (strain ATCC 24698 / 74-OR23-1A / CBS 708.71 / DSM 1257 / FGSC 987), this protein is Lytic polysaccharide monooxygenase NCU01050.